Consider the following 368-residue polypeptide: 1-deoxy-D-xylulose 5-phosphate reductoisomerase (368 aa).

NADPH contacts are provided by T7, G8, S9, I10, G31, K32, N33, and N113. K114 contributes to the 1-deoxy-D-xylulose 5-phosphate binding site. E115 serves as a coordination point for NADPH. D133 contributes to the Mn(2+) binding site. 1-deoxy-D-xylulose 5-phosphate contacts are provided by S134, E135, S158, and H181. Residue E135 participates in Mn(2+) binding. G187 serves as a coordination point for NADPH. S194, N199, K200, and E203 together coordinate 1-deoxy-D-xylulose 5-phosphate. A Mn(2+)-binding site is contributed by E203.

The protein belongs to the DXR family. The cofactor is Mg(2+). It depends on Mn(2+) as a cofactor.

It carries out the reaction 2-C-methyl-D-erythritol 4-phosphate + NADP(+) = 1-deoxy-D-xylulose 5-phosphate + NADPH + H(+). It participates in isoprenoid biosynthesis; isopentenyl diphosphate biosynthesis via DXP pathway; isopentenyl diphosphate from 1-deoxy-D-xylulose 5-phosphate: step 1/6. Its function is as follows. Catalyzes the NADPH-dependent rearrangement and reduction of 1-deoxy-D-xylulose-5-phosphate (DXP) to 2-C-methyl-D-erythritol 4-phosphate (MEP). This Helicobacter pylori (strain ATCC 700392 / 26695) (Campylobacter pylori) protein is 1-deoxy-D-xylulose 5-phosphate reductoisomerase.